The chain runs to 207 residues: Large ribosomal subunit protein uL4 (207 aa).

Residues 44–76 (KRRGTASAKTRSEVRGGGRKPWRQKGTGRARHG) are disordered. Positions 60–76 (GGRKPWRQKGTGRARHG) are enriched in basic residues.

Belongs to the universal ribosomal protein uL4 family. In terms of assembly, part of the 50S ribosomal subunit.

In terms of biological role, one of the primary rRNA binding proteins, this protein initially binds near the 5'-end of the 23S rRNA. It is important during the early stages of 50S assembly. It makes multiple contacts with different domains of the 23S rRNA in the assembled 50S subunit and ribosome. Forms part of the polypeptide exit tunnel. In Natranaerobius thermophilus (strain ATCC BAA-1301 / DSM 18059 / JW/NM-WN-LF), this protein is Large ribosomal subunit protein uL4.